A 186-amino-acid polypeptide reads, in one-letter code: Potassium-transporting ATPase KdpC subunit (186 aa).

The chain crosses the membrane as a helical span at residues 9–29; sequence AAVVLFGGCLLVLGLLYPLAM.

The protein belongs to the KdpC family. As to quaternary structure, the system is composed of three essential subunits: KdpA, KdpB and KdpC.

The protein resides in the cell membrane. Part of the high-affinity ATP-driven potassium transport (or Kdp) system, which catalyzes the hydrolysis of ATP coupled with the electrogenic transport of potassium into the cytoplasm. This subunit acts as a catalytic chaperone that increases the ATP-binding affinity of the ATP-hydrolyzing subunit KdpB by the formation of a transient KdpB/KdpC/ATP ternary complex. This chain is Potassium-transporting ATPase KdpC subunit, found in Methanosphaerula palustris (strain ATCC BAA-1556 / DSM 19958 / E1-9c).